Consider the following 324-residue polypeptide: Serine racemase (324 aa).

Residues Ser-32, Lys-51, and Thr-52 each coordinate ATP. The Proton acceptor role is filled by Lys-56. Position 56 is an N6-(pyridoxal phosphate)lysine (Lys-56). Thr-78 is a binding site for Ca(2+). Ser-81 (proton acceptor) is an active-site residue. A pyridoxal 5'-phosphate-binding site is contributed by Asn-83. Gln-86 and Tyr-118 together coordinate ATP. Residue Asp-175 participates in Mg(2+) binding. Gly-182, Gly-183, Gly-184, and Gly-185 together coordinate pyridoxal 5'-phosphate. 3 residues coordinate Ca(2+): Glu-207, Ala-211, and Asp-213. Mg(2+) is bound by residues Glu-207, Ala-211, and Asp-213. Residues Glu-207, Ala-211, and Asp-213 each coordinate Mn(2+). Lys-277 provides a ligand contact to ATP. Position 310 (Ser-310) interacts with pyridoxal 5'-phosphate. Asn-313 is a binding site for ATP.

This sequence belongs to the serine/threonine dehydratase family. As to quaternary structure, homodimer. The cofactor is Mg(2+). Requires Mn(2+) as cofactor. Ca(2+) serves as cofactor. It depends on pyridoxal 5'-phosphate as a cofactor.

The catalysed reaction is L-serine = D-serine. It catalyses the reaction L-serine = pyruvate + NH4(+). It carries out the reaction D-serine = pyruvate + NH4(+). Catalyzes the synthesis of D-serine from L-serine. Has dehydratase activity towards both L-serine and D-serine. This chain is Serine racemase (srr), found in Dictyostelium discoideum (Social amoeba).